A 175-amino-acid polypeptide reads, in one-letter code: tRNA-acetylating toxin 3 (175 aa).

Positions 95, 97, 103, 105, 107, 108, 133, 138, 141, and 142 each coordinate acetyl-CoA. Tyrosine 143 is a catalytic residue. Glycine 145 and phenylalanine 146 together coordinate acetyl-CoA.

This sequence belongs to the acetyltransferase family. GNAT subfamily. In terms of assembly, homodimer (in absence of antitoxin); has a condensed and elongated form. Forms a complex with cognate antitoxin TacA3. Forms a 4:2 antitoxin:toxin complex with cognate antitoxin TacA3. Forms a 4:4 antitoxin:toxin complex with promoter DNA, where 2 TacT3 dimers bridge 2 TacA3 dimers. Only TacA3 contacts promoter DNA in the octomeric form. TacT3 may contact DNA in the hexameric form.

It catalyses the reaction glycyl-tRNA(Gly) + acetyl-CoA = N-acetylglycyl-tRNA(Gly) + CoA + H(+). In terms of biological role, toxic component of a type II toxin-antitoxin (TA) system. Acetylates tRNA and inhibits translation. Acetylates only Gly-tRNA on all 3 Gly-tRNA(Gly) isoacceptors in situ. In vitro acetylates mainly Ile/Leu and Gly. Overexpression during the lag phase of a tacA3-tacT3 deletion strain leads to a 150-fold increase in persister cells in the presence of cefotaxime and a non-growth state in the absence of antibiotic. Persister cell formation and the growth defect are neutralized by cognate antitoxin TacA3, but not by TacA1 or TacA2. Plays a role in persister cell formation. Its function is as follows. The TacA3-TacT3 complex both represses and derepresses expression of its own operon. The hexameric 4:2 TacA3-TacT3 complex binds promoter DNA and represses its transcription; both subunits are required. The octomeric 4:4 TacA3-TacT3 complex derepresses the operon. The shift from hexameric to octomeric complex probably alters DNA-binding, leading to dissociation from the operator DNA and derepression. This Salmonella typhimurium (strain 14028s / SGSC 2262) protein is tRNA-acetylating toxin 3.